Here is a 26-residue protein sequence, read N- to C-terminus: Oxyopinin-3a (26 aa).

Expressed by the venom gland.

It localises to the secreted. May have cytolytic and antimicrobial activity. The chain is Oxyopinin-3a from Oxyopes takobius (Lynx spider).